The following is a 107-amino-acid chain: Urease subunit beta (107 aa).

The protein belongs to the urease beta subunit family. Heterotrimer of UreA (gamma), UreB (beta) and UreC (alpha) subunits. Three heterotrimers associate to form the active enzyme.

The protein localises to the cytoplasm. It carries out the reaction urea + 2 H2O + H(+) = hydrogencarbonate + 2 NH4(+). It participates in nitrogen metabolism; urea degradation; CO(2) and NH(3) from urea (urease route): step 1/1. In Escherichia coli, this protein is Urease subunit beta.